Reading from the N-terminus, the 290-residue chain is 4-hydroxybenzoate octaprenyltransferase (290 aa).

A run of 7 helical transmembrane segments spans residues 33 to 53 (LWAL…AVFV), 99 to 119 (LFVV…TMTI), 141 to 161 (LPQV…FAAV), 163 to 183 (ESVP…AVAY), 213 to 233 (FIIG…GWLN), 237 to 257 (WGYY…QKLI), and 268 to 288 (AFMN…MSYW).

The protein belongs to the UbiA prenyltransferase family. Mg(2+) is required as a cofactor.

The protein resides in the cell inner membrane. It catalyses the reaction all-trans-octaprenyl diphosphate + 4-hydroxybenzoate = 4-hydroxy-3-(all-trans-octaprenyl)benzoate + diphosphate. The protein operates within cofactor biosynthesis; ubiquinone biosynthesis. Functionally, catalyzes the prenylation of para-hydroxybenzoate (PHB) with an all-trans polyprenyl group. Mediates the second step in the final reaction sequence of ubiquinone-8 (UQ-8) biosynthesis, which is the condensation of the polyisoprenoid side chain with PHB, generating the first membrane-bound Q intermediate 3-octaprenyl-4-hydroxybenzoate. This chain is 4-hydroxybenzoate octaprenyltransferase, found in Escherichia fergusonii (strain ATCC 35469 / DSM 13698 / CCUG 18766 / IAM 14443 / JCM 21226 / LMG 7866 / NBRC 102419 / NCTC 12128 / CDC 0568-73).